Reading from the N-terminus, the 146-residue chain is Hemoglobin subunit beta (146 aa).

The region spanning 2-146 (HWSAEEKQLI…VAHALARKYH (145 aa)) is the Globin domain. Residues histidine 63 and histidine 92 each contribute to the heme b site.

It belongs to the globin family. Heterotetramer of two alpha chains and two beta chains. As to expression, red blood cells.

In terms of biological role, involved in oxygen transport from the lung to the various peripheral tissues. This chain is Hemoglobin subunit beta (HBB), found in Anseranas semipalmata (Magpie goose).